We begin with the raw amino-acid sequence, 333 residues long: Probable xyloglucan endotransglucosylase/hydrolase protein 27 (333 aa).

An N-terminal signal peptide occupies residues 1–20 (METLSRLLVFMSLFSGLVSG). Positions 21-223 (FALQNLPITS…YKYAPYIARF (203 aa)) constitute a GH16 domain. The Nucleophile role is filled by Glu108. Glu112 serves as the catalytic Proton donor. Residues Glu112 and 125 to 127 (QTN) each bind xyloglucan. Asn131 carries an N-linked (GlcNAc...) asparagine glycan. Xyloglucan contacts are provided by residues 135-139 (HSGRE), 202-203 (KW), Gly207, and Arg282. A disulfide bridge links Cys277 with Cys290. The segment at 311 to 333 (IPRRHRNGKHRSKRSRVDGTESI) is disordered. Over residues 312 to 324 (PRRHRNGKHRSKR) the composition is skewed to basic residues.

The protein belongs to the glycosyl hydrolase 16 family. XTH group 3 subfamily. In terms of processing, contains at least one intrachain disulfide bond essential for its enzymatic activity. In terms of tissue distribution, expressed in 7 day old seedlings, roots, hypocotyls, rosette leaves, internodes between nodes bearing axillary shoots, nodes bearing flowers, flower buds, anthers and siliques.

The protein localises to the secreted. Its subcellular location is the cell wall. It is found in the extracellular space. The protein resides in the apoplast. It catalyses the reaction breaks a beta-(1-&gt;4) bond in the backbone of a xyloglucan and transfers the xyloglucanyl segment on to O-4 of the non-reducing terminal glucose residue of an acceptor, which can be a xyloglucan or an oligosaccharide of xyloglucan.. In terms of biological role, catalyzes xyloglucan endohydrolysis (XEH) and/or endotransglycosylation (XET). Cleaves and religates xyloglucan polymers, an essential constituent of the primary cell wall, and thereby participates in cell wall construction of growing tissues. Required for cell wall modification during the development of tracheary elements. This is Probable xyloglucan endotransglucosylase/hydrolase protein 27 (XTH27) from Arabidopsis thaliana (Mouse-ear cress).